We begin with the raw amino-acid sequence, 458 residues long: Preferentially expressed antigen in melanoma-like protein 1 (458 aa).

One copy of the LRR 1; degenerate repeat lies at 99–126 (RCKLQVLDLRVMPLKLWNRLPVFGTAGC). Residues 176 to 200 (SLCCCKLQIWAMSMYYHRKLLEILD) form an LRR 2; degenerate repeat. The stretch at 201 to 227 (LDSVQELRMYCISNPVCLLNFAPYLGR) is one LRR 3; degenerate repeat. The stretch at 228 to 263 (MRNLRCLILSHLWQTFSMTPVEKQQVITQFTSQFLK) is one LRR 4; degenerate repeat. LRR repeat units follow at residues 264–289 (LKCLQILHLDTVFFLEGHLDELFWWL), 290–321 (KTPLETLSVIDCNLSKSDWFHISEFQCTSQLK), 322–340 (HLNLKWVKLTHLSPEPLRV), 346–373 (ASTLTSLDLEGCQMMDSQLSAILPALRC), and 374–398 (CTQLTKFNFHGNYISMPILRELAYN).

The protein belongs to the PRAME family. In terms of tissue distribution, specifically expressed in testis (at protein level).

It is found in the cytoplasm. Its subcellular location is the cytoplasmic vesicle. The protein resides in the secretory vesicle. It localises to the acrosome. The protein localises to the cell projection. It is found in the cilium. Its subcellular location is the flagellum. May play a role in acrosome development and also in sperm maturation and motility. The polypeptide is Preferentially expressed antigen in melanoma-like protein 1 (Mus musculus (Mouse)).